The following is a 69-amino-acid chain: Iota-conotoxin LtIIIA (69 aa).

Residues M1–L20 form the signal peptide. Residues E21–R52 constitute a propeptide that is removed on maturation. A 4-carboxyglutamate mark is found at E54 and E57. 3 cysteine pairs are disulfide-bonded: C55–C67, C56–C65, and C61–C68. A 4-hydroxyproline modification is found at P58.

In terms of tissue distribution, expressed by the venom duct.

The protein localises to the secreted. In terms of biological role, iota-conotoxins bind to voltage-gated sodium channels and act as agonists by shifting the voltage-dependence of activation to more hyperpolarized levels. This toxin enhances tetrodotoxin-sensitive sodium current in rat dorsal root ganglion neurons. The sequence is that of Iota-conotoxin LtIIIA from Conus litteratus (Lettered cone).